The following is an 866-amino-acid chain: Dimethylglycine dehydrogenase, mitochondrial (866 aa).

A mitochondrion-targeting transit peptide spans 1 to 50 (MLRPGAQLLRGLLLRSCPLQGSPGRPRSVCGREGEEKPPLSAETQWKDRA). Residues 20-42 (QGSPGRPRSVCGREGEEKPPLSA) form a disordered region. FAD is bound by residues 59-60 (CV), 80-81 (EK), and 87-95 (GSTWHAAGL). A Tele-8alpha-FAD histidine modification is found at His-91. Lys-114 carries the post-translational modification N6-acetyllysine. Lys-148 is subject to N6-acetyllysine; alternate. An N6-succinyllysine; alternate modification is found at Lys-148. Lys-168 bears the N6-acetyllysine mark. An FAD-binding site is contributed by Val-219. An N6-acetyllysine modification is found at Lys-223. Trp-251 contacts FAD. Lys-317 and Lys-319 each carry N6-succinyllysine. N6-acetyllysine occurs at positions 335 and 360. 397 to 402 (FGYGII) is an FAD binding site. 2 positions are modified to N6-acetyllysine; alternate: Lys-434 and Lys-523. 2 positions are modified to N6-succinyllysine; alternate: Lys-434 and Lys-523. Position 580–582 (580–582 (ELT)) interacts with (6S)-5,6,7,8-tetrahydrofolate. Position 655 is an N6-acetyllysine; alternate (Lys-655). Lys-655 carries the N6-succinyllysine; alternate modification. (6S)-5,6,7,8-tetrahydrofolate is bound by residues Tyr-676, 683–685 (ELY), and Tyr-744. Lys-764 is modified (N6-acetyllysine). Lys-795 is subject to N6-succinyllysine.

This sequence belongs to the GcvT family. Monomer. FAD serves as cofactor.

The protein localises to the mitochondrion. The catalysed reaction is (6S)-5,6,7,8-tetrahydrofolyl-(gamma-L-Glu)(n) + N,N-dimethylglycine + oxidized [electron-transfer flavoprotein] + H(+) = (6R)-5,10-methylenetetrahydrofolyl-(gamma-L-Glu)(n) + sarcosine + reduced [electron-transfer flavoprotein]. It participates in amine and polyamine degradation; betaine degradation; sarcosine from betaine: step 2/2. Catalyzes the demethylation of N,N-dimethylglycine to sarcosine. Also has activity with sarcosine in vitro. This is Dimethylglycine dehydrogenase, mitochondrial (DMGDH) from Homo sapiens (Human).